Here is a 493-residue protein sequence, read N- to C-terminus: Protein nucleotidyltransferase YdiU (493 aa).

ATP-binding residues include Gly94, Gly96, Arg97, Lys117, Asp129, Gly130, Arg180, and Arg187. Asp256 serves as the catalytic Proton acceptor. Asn257 and Asp266 together coordinate Mg(2+). An ATP-binding site is contributed by Asp266.

The protein belongs to the SELO family. Mg(2+) is required as a cofactor. It depends on Mn(2+) as a cofactor.

The catalysed reaction is L-seryl-[protein] + ATP = 3-O-(5'-adenylyl)-L-seryl-[protein] + diphosphate. It catalyses the reaction L-threonyl-[protein] + ATP = 3-O-(5'-adenylyl)-L-threonyl-[protein] + diphosphate. The enzyme catalyses L-tyrosyl-[protein] + ATP = O-(5'-adenylyl)-L-tyrosyl-[protein] + diphosphate. It carries out the reaction L-histidyl-[protein] + UTP = N(tele)-(5'-uridylyl)-L-histidyl-[protein] + diphosphate. The catalysed reaction is L-seryl-[protein] + UTP = O-(5'-uridylyl)-L-seryl-[protein] + diphosphate. It catalyses the reaction L-tyrosyl-[protein] + UTP = O-(5'-uridylyl)-L-tyrosyl-[protein] + diphosphate. In terms of biological role, nucleotidyltransferase involved in the post-translational modification of proteins. It can catalyze the addition of adenosine monophosphate (AMP) or uridine monophosphate (UMP) to a protein, resulting in modifications known as AMPylation and UMPylation. The sequence is that of Protein nucleotidyltransferase YdiU from Hahella chejuensis (strain KCTC 2396).